We begin with the raw amino-acid sequence, 1022 residues long: GPI ethanolamine phosphate transferase 1 (1022 aa).

At 1–6 (MARVGR) the chain is on the cytoplasmic side. A helical transmembrane segment spans residues 7–27 (VGFLTLAVVFHLMYAYSIFDI). Residues 28–466 (YFVSPIVSGM…LQTYDWLFLR (439 aa)) are Lumenal-facing. N-linked (GlcNAc...) asparagine glycosylation is found at asparagine 148 and asparagine 433. Residues 467 to 487 (TIVSLGYLGWIAYALTTVIDL) form a helical membrane-spanning segment. Residues 488 to 498 (HVLHGKSESNR) are Cytoplasmic-facing. Residues 499-519 (TTFSIMFFSSILVALFSVLLY) form a helical membrane-spanning segment. Residues 520–560 (QGSSWRYYLYALFPIFFWEEVFARRKALLAGREILLGHVHS) lie on the Lumenal side of the membrane. The helical transmembrane segment at 561-581 (VSGYFAFAIQLLLYVGVLEAL) threads the bilayer. The Cytoplasmic segment spans residues 582 to 589 (VQSYFHRD). Residues 590-610 (IFTVCFILGGFWPITYGTKFL) traverse the membrane as a helical segment. Residues 611-614 (GQHK) are Lumenal-facing. Residues 615–635 (LLSASWALGCFLMSIFTLLPA) form a helical membrane-spanning segment. At 636-640 (NKVED) the chain is on the cytoplasmic side. The helical transmembrane segment at 641–661 (MMMISCGSLLMFLTGLLYLIF) threads the bilayer. Over 662–685 (ERSILGQKRSSDPNSVVSSCGSRT) the chain is Lumenal. The helical transmembrane segment at 686 to 706 (IMGAQVGMILLALIVTRSSVA) threads the bilayer. At 707 to 713 (SLQAKQG) the chain is on the cytoplasmic side. A helical transmembrane segment spans residues 714–734 (LPLGNQVLGWAILVSSLLLPF). The Lumenal portion of the chain corresponds to 735 to 749 (LHRLYPNSHYLHRLM). The next 2 helical transmembrane spans lie at 750–770 (VIFL…EGLF) and 771–791 (YFVF…IYIH). Over 792-837 (TTAPTREQDHSVANGSLPAKKPSPGNTVVVEGQPYRYRTLSVSDAR) the chain is Lumenal. N-linked (GlcNAc...) asparagine glycosylation is present at asparagine 805. Residues 838–858 (VALFFFFLLQSGFFSTGNIAS) traverse the membrane as a helical segment. The Cytoplasmic segment spans residues 859–880 (VSSFSLDSVYRLIPIFNPFAQG). Residues 881 to 901 (ALLILKLLIPFAIISANLGIL) traverse the membrane as a helical segment. The Lumenal segment spans residues 902–910 (NHRLEVAPS). Residues 911 to 931 (ALFMVVMSISDVMTLNFFYMV) traverse the membrane as a helical segment. The Cytoplasmic segment spans residues 932 to 947 (RDEGSWLEIGTTISHF). Residues 948–968 (CIASFLCTFVAVLEFLSELFI) form a helical membrane-spanning segment. At 969-1022 (SGVDFGHPATTVGSAVAKAVNGSVACGHSPDSDISGEDSTSVGITAKADPDARS) the chain is on the lumenal side. Asparagine 989 carries N-linked (GlcNAc...) asparagine glycosylation. The tract at residues 998 to 1022 (PDSDISGEDSTSVGITAKADPDARS) is disordered.

Belongs to the PIGG/PIGN/PIGO family. PIGN subfamily.

Its subcellular location is the endoplasmic reticulum membrane. It participates in glycolipid biosynthesis; glycosylphosphatidylinositol-anchor biosynthesis. Ethanolamine phosphate transferase involved in glycosylphosphatidylinositol-anchor biosynthesis. Transfers ethanolamine phosphate to the first alpha-1,4-linked mannose of the glycosylphosphatidylinositol precursor of GPI-anchor. The sequence is that of GPI ethanolamine phosphate transferase 1 (mcd4) from Aspergillus oryzae (strain ATCC 42149 / RIB 40) (Yellow koji mold).